A 611-amino-acid polypeptide reads, in one-letter code: Leukotriene A-4 hydrolase (611 aa).

Position 73 is an N6-acetyllysine (Lys-73). Residues 135–137 (QCQ) and 267–272 (PYGGME) each bind a peptide. Residue His-296 coordinates Zn(2+). The Proton acceptor role is filled by Glu-297. Zn(2+) is bound by residues His-300 and Glu-319. Lys-337 carries the post-translational modification N6-acetyllysine. Tyr-384 acts as the Proton donor in catalysis. Lys-414 is subject to N6-acetyllysine. Phosphoserine is present on Ser-416. A peptide is bound at residue 564–566 (RMK). An N6-acetyllysine modification is found at Lys-573.

This sequence belongs to the peptidase M1 family. As to quaternary structure, monomer. Zn(2+) serves as cofactor. Post-translationally, phosphorylation at Ser-416 inhibits leukotriene-A4 hydrolase activity. activity.

The protein localises to the cytoplasm. It catalyses the reaction leukotriene A4 + H2O = leukotriene B4. The catalysed reaction is (5S,6S)-epoxy-(18R)-hydroxy-(7E,9E,11Z,14Z,16E)-eicosapentaenoate + H2O = resolvin E1. The enzyme catalyses (5S,6S)-epoxy-(18S)-hydroxy-(7E,9E,11Z,14Z,16E)-eicosapentaenoate + H2O = 18S-resolvin E1. It carries out the reaction Release of the N-terminal residue from a tripeptide.. The protein operates within lipid metabolism; leukotriene B4 biosynthesis. Inhibited by bestatin. The epoxide hydrolase activity is restrained by suicide inactivation that involves binding of LTA4 to Tyr-379. 4-(4-benzylphenyl)thiazol-2-amine (ARM1) selectively inhibits the epoxide hydrolase activity. Bifunctional zinc metalloenzyme that comprises both epoxide hydrolase (EH) and aminopeptidase activities. Acts as an epoxide hydrolase to catalyze the conversion of LTA4 to the pro-inflammatory mediator leukotriene B4 (LTB4). Also has aminopeptidase activity, with high affinity for N-terminal arginines of various synthetic tripeptides. In addition to its pro-inflammatory EH activity, may also counteract inflammation by its aminopeptidase activity, which inactivates by cleavage another neutrophil attractant, the tripeptide Pro-Gly-Pro (PGP), a bioactive fragment of collagen generated by the action of matrix metalloproteinase-9 (MMP9) and prolylendopeptidase (PREPL). Involved also in the biosynthesis of resolvin E1 and 18S-resolvin E1 from eicosapentaenoic acid, two lipid mediators that show potent anti-inflammatory and pro-resolving actions. This is Leukotriene A-4 hydrolase (LTA4H) from Bos taurus (Bovine).